We begin with the raw amino-acid sequence, 233 residues long: Pyridoxal phosphate homeostasis protein (233 aa).

K36 bears the N6-(pyridoxal phosphate)lysine mark.

It belongs to the pyridoxal phosphate-binding protein YggS/PROSC family.

Functionally, pyridoxal 5'-phosphate (PLP)-binding protein, which is involved in PLP homeostasis. The chain is Pyridoxal phosphate homeostasis protein from Vibrio alginolyticus.